Consider the following 144-residue polypeptide: Large ribosomal subunit protein uL16 (144 aa).

This sequence belongs to the universal ribosomal protein uL16 family. Part of the 50S ribosomal subunit.

Functionally, binds 23S rRNA and is also seen to make contacts with the A and possibly P site tRNAs. The chain is Large ribosomal subunit protein uL16 from Levilactobacillus brevis (strain ATCC 367 / BCRC 12310 / CIP 105137 / JCM 1170 / LMG 11437 / NCIMB 947 / NCTC 947) (Lactobacillus brevis).